We begin with the raw amino-acid sequence, 1123 residues long: RNA-binding protein 6 (1123 aa).

2 disordered regions span residues 1–391 and 413–454; these read MWGD…EGGL and LPGS…EEKP. Phosphoserine is present on serine 17. A Glycyl lysine isopeptide (Lys-Gly) (interchain with G-Cter in SUMO2) cross-link involves residue lysine 36. A compositionally biased stretch (basic and acidic residues) spans 79 to 97; that stretch reads DGPHGDYRGGEGPGHDFRG. The segment covering 98 to 114 has biased composition (low complexity); the sequence is GDFSSSDFQSRDSSQLD. Composition is skewed to basic and acidic residues over residues 115–131 and 145–237; these read FRGR…REGP and YRGR…DFRG. Serine 240 bears the Phosphoserine mark. Composition is skewed to basic and acidic residues over residues 245-286 and 301-323; these read LDFR…REMP and QDRE…HTIE. Lysine 331 is covalently cross-linked (Glycyl lysine isopeptide (Lys-Gly) (interchain with G-Cter in SUMO2)). Over residues 332-354 the composition is skewed to basic and acidic residues; the sequence is GEFEHSETREGETQGVAFEHESP. Phosphothreonine is present on threonine 344. Residues 356–365 are compositionally biased toward polar residues; it reads DFQNSQSPVQ. A phosphoserine mark is found at serine 360 and serine 362. Basic and acidic residues-rich tracts occupy residues 366–391 and 431–454; these read DQDK…EGGL and KTAR…EEKP. Residues lysine 386, lysine 453, lysine 469, and lysine 569 each participate in a glycyl lysine isopeptide (Lys-Gly) (interchain with G-Cter in SUMO2) cross-link. An RRM domain is found at 456-536; sequence RLIRLSGVPE…KEVTLEYVSS (81 aa). 3 disordered regions span residues 574–654, 741–787, and 827–948; these read TYPQ…QDGE, KRRN…QSSS, and EEEI…EEDK. 2 stretches are compositionally biased toward basic and acidic residues: residues 597–654 and 742–754; these read PADK…QDGE and RRND…DHMH. Residues 772-787 are compositionally biased toward polar residues; the sequence is SDWSSDTNRQGQQSSS. The span at 843–860 shows a compositional bias: basic and acidic residues; the sequence is SKKEMSKRDGKEKKDRGV. Residues lysine 871, lysine 879, and lysine 887 each participate in a glycyl lysine isopeptide (Lys-Gly) (interchain with G-Cter in SUMO2) cross-link. Residue serine 891 is modified to Phosphoserine. Over residues 910–922 the composition is skewed to acidic residues; sequence GDSDYEEEEEEEQ. Basic and acidic residues predominate over residues 934-948; the sequence is QKREEQTKKENEEDK. Glycyl lysine isopeptide (Lys-Gly) (interchain with G-Cter in SUMO2) cross-links involve residues lysine 935, lysine 948, lysine 991, and lysine 1019. Positions 1004 to 1051 are enriched in basic and acidic residues; the sequence is EREGKFKGRGNDRREKLQSFDSPERKRIKYSRETDSDRKLVDKEDIDT. Residues 1004-1106 form a disordered region; the sequence is EREGKFKGRG…RTSKRQSNET (103 aa). Phosphoserine is present on residues serine 1022 and serine 1025. Residues lysine 1042, lysine 1046, and lysine 1066 each participate in a glycyl lysine isopeptide (Lys-Gly) (interchain with G-Cter in SUMO2) cross-link. One can recognise a G-patch domain in the interval 1051–1097; that stretch reads TSSKGGCVQQATGWRKGTGLGYGHPGLASSEEAEGRMRGPSVGASGR.

As to quaternary structure, may interact with FAM168B. As to expression, ubiquitous in adults.

It is found in the nucleus. In terms of biological role, specifically binds poly(G) RNA homopolymers in vitro. This Homo sapiens (Human) protein is RNA-binding protein 6 (RBM6).